The primary structure comprises 443 residues: MVLDSLGRALSNALKKIARAGSVDEALVKEVVRDIQRALLQADVNVRLVLKLTKEIQRRALEEKPPAGISKKEHIIKIVYEELTKFLGTEAKPIEIKEKPTVLLTVGVQGSGKTTTVAKLARYFQKRGYKVGVVCSDTWRPGAYHQLKQLLDPYHIEVFGDPNEKDAVKLAKEGVEYFKTRDVDLIIVDTAGRHKEEKDLIEEMRMISEEIRPHEVILVIDGTIGQQAYNQALAFKEATPIGSIIVTKLDSSAKGGGALSAVAATGAPIKFIGVGEKIDDLEPFDPARFVSRLLGLGDIQGLLEKFKELEKEVEFTEEDIDRFLRGKFTLKDMYAQLEAMRKMGPLKQILRMIPGLGYSLPDELISVGEERLRKFKVIMDSMTEEELMNPEIINYSRIKRIARGSGTSIKDVKELLTQYNQMKKFFKSMNKRQLSRLARRFGM.

Residues 107 to 114, 189 to 193, and 247 to 250 each bind GTP; these read GVQGSGKT, DTAGR, and TKLD.

This sequence belongs to the GTP-binding SRP family. SRP54 subfamily. In terms of assembly, part of the signal recognition particle protein translocation system, which is composed of SRP and FtsY. Archaeal SRP consists of a 7S RNA molecule of 300 nucleotides and two protein subunits: SRP54 and SRP19.

The protein localises to the cytoplasm. It catalyses the reaction GTP + H2O = GDP + phosphate + H(+). Its function is as follows. Involved in targeting and insertion of nascent membrane proteins into the cytoplasmic membrane. Binds to the hydrophobic signal sequence of the ribosome-nascent chain (RNC) as it emerges from the ribosomes. The SRP-RNC complex is then targeted to the cytoplasmic membrane where it interacts with the SRP receptor FtsY. The polypeptide is Signal recognition particle 54 kDa protein (Pyrococcus horikoshii (strain ATCC 700860 / DSM 12428 / JCM 9974 / NBRC 100139 / OT-3)).